The sequence spans 200 residues: NAD(P)H dehydrogenase (quinone) (200 aa).

In terms of domain architecture, Flavodoxin-like spans 4–191 (VLVLYYSSYG…DIARYQGKHV (188 aa)). FMN contacts are provided by residues 10 to 15 (SSYGHV) and 79 to 81 (TRF). Residue Tyr12 participates in NAD(+) binding. Residue Trp99 coordinates substrate. Residues 114 to 120 (STGTQHG) and His135 contribute to the FMN site.

It belongs to the WrbA family. The cofactor is FMN.

The enzyme catalyses a quinone + NADH + H(+) = a quinol + NAD(+). The catalysed reaction is a quinone + NADPH + H(+) = a quinol + NADP(+). This is NAD(P)H dehydrogenase (quinone) from Burkholderia orbicola (strain MC0-3).